Here is a 227-residue protein sequence, read N- to C-terminus: MFS-type transporter FVEG_08288 (227 aa).

The helical transmembrane segment at 8–28 (VFLTVLIAIASCSVYILNIAI) threads the bilayer. N-linked (GlcNAc...) asparagine glycosylation occurs at N40. 5 helical membrane passes run 43–63 (TVGL…MAGG), 100–120 (VANT…YYGV), 122–142 (FMVP…HFTL), 164–181 (FVRN…APWM), and 188–208 (YMMT…IWLI).

This sequence belongs to the major facilitator superfamily.

It is found in the membrane. MFS-type transporter; part of the Fusarium detoxification of benzoxazolinone cluster 1 (FDB1) involved in the degradation of benzoxazolinones produced by the host plant. Maize, wheat, and rye produce the 2 benzoxazinone phytoanticipins 2,4-dihy-droxy-7-methoxy-1,4-benzoxazin-3-one (DIMBOA) and 2,4-dihydroxy-1,4-benzoxazin-3-one (DIBOA) that, due to their inherent instability once released, spontaneously degrade to the more stable corresponding benzoxazolinones, 6-methoxy-2-benzoxazolinone (MBOA) and 2-benzoxazolinone (BOA), respectively. In Gibberella moniliformis (strain M3125 / FGSC 7600) (Maize ear and stalk rot fungus), this protein is MFS-type transporter FVEG_08288.